A 32-amino-acid chain; its full sequence is U6-ctenitoxin-Pr1a (32 aa).

Cystine bridges form between Cys3-Cys17, Cys10-Cys21, and Cys16-Cys30.

Expressed by the venom gland.

It is found in the secreted. The sequence is that of U6-ctenitoxin-Pr1a from Phoneutria reidyi (Brazilian Amazonian armed spider).